Reading from the N-terminus, the 401-residue chain is Secreted LysM effector Blys8 (401 aa).

A signal peptide spans 1–19; that stretch reads MRTLAIFFIGAAVAAHVSP. A LysM 1 domain is found at 42 to 89; that stretch reads TYYDEAYDKSYTCDDLLSAWVISKQDFESWNPAVGSDCKLVLGHSYCV. Low complexity predominate over residues 98–136; the sequence is STTTTTTTSTTTKTTTKTTTTTTAAPKPTSSAPSGPSPT. The segment at 98 to 137 is disordered; that stretch reads STTTTTTTSTTTKTTTKTTTTTTAAPKPTSSAPSGPSPTQ. The region spanning 146-193 is the LysM 2 domain; sequence AYYFVKAGDTCDKISQMYGTFSTAQFIEWNPAVGSSCTGLWAGYYYCV. The disordered stretch occupies residues 201–223; that stretch reads SRTSTAGPTSTKPANGVTTPQPT. Residues 233 to 279 enclose the LysM 3 domain; sequence QFVYVQPGDQCGTVASRAGVSLSDFLQWNPSTGKDCSGLWANAYACV.

This sequence belongs to the secreted LysM effector family.

Its function is as follows. Might have a role in sequestration of chitin oligosaccharides (breakdown products of fungal cell walls that are released during invasion and act as triggers of host immunity) to dampen host defense. The chain is Secreted LysM effector Blys8 from Beauveria bassiana (strain ARSEF 2860) (White muscardine disease fungus).